The following is a 283-amino-acid chain: uncharacterized protein (283 aa).

Residue D121 is part of the active site.

It belongs to the pseudouridine synthase RluA family.

The enzyme catalyses a uridine in RNA = a pseudouridine in RNA. This is an uncharacterized protein from Bacillus subtilis (strain 168).